The primary structure comprises 61 residues: Large ribosomal subunit protein uL30 (61 aa).

The protein belongs to the universal ribosomal protein uL30 family. In terms of assembly, part of the 50S ribosomal subunit.

This chain is Large ribosomal subunit protein uL30, found in Mycobacterium sp. (strain KMS).